Here is a 134-residue protein sequence, read N- to C-terminus: ATP synthase epsilon chain, chloroplastic (134 aa).

The protein belongs to the ATPase epsilon chain family. As to quaternary structure, F-type ATPases have 2 components, CF(1) - the catalytic core - and CF(0) - the membrane proton channel. CF(1) has five subunits: alpha(3), beta(3), gamma(1), delta(1), epsilon(1). CF(0) has three main subunits: a, b and c.

The protein localises to the plastid. It localises to the chloroplast thylakoid membrane. Functionally, produces ATP from ADP in the presence of a proton gradient across the membrane. The sequence is that of ATP synthase epsilon chain, chloroplastic from Drimys granadensis.